The primary structure comprises 249 residues: Tetrahydromethanopterin S-methyltransferase subunit D (249 aa).

The next 6 membrane-spanning stretches (helical) occupy residues Ile9 to Val29, Gly47 to Met67, Leu75 to Gly95, Val138 to Tyr158, Leu183 to Ser203, and Ala224 to Ser244.

The protein belongs to the MtrD family. The complex is composed of 8 subunits; MtrA, MtrB, MtrC, MtrD, MtrE, MtrF, MtrG and MtrH.

The protein localises to the cell membrane. The catalysed reaction is 5-methyl-5,6,7,8-tetrahydromethanopterin + coenzyme M + 2 Na(+)(in) = 5,6,7,8-tetrahydromethanopterin + methyl-coenzyme M + 2 Na(+)(out). Its pathway is one-carbon metabolism; methanogenesis from CO(2); methyl-coenzyme M from 5,10-methylene-5,6,7,8-tetrahydromethanopterin: step 2/2. Its function is as follows. Part of a complex that catalyzes the formation of methyl-coenzyme M and tetrahydromethanopterin from coenzyme M and methyl-tetrahydromethanopterin. This is an energy-conserving, sodium-ion translocating step. This Methanosarcina acetivorans (strain ATCC 35395 / DSM 2834 / JCM 12185 / C2A) protein is Tetrahydromethanopterin S-methyltransferase subunit D.